Here is a 424-residue protein sequence, read N- to C-terminus: 23S rRNA (uracil(1939)-C(5))-methyltransferase RlmD (424 aa).

A TRAM domain is found at M1–E56. [4Fe-4S] cluster is bound by residues C69, C75, C78, and C155. Positions 255, 284, 289, 305, 333, and 354 each coordinate S-adenosyl-L-methionine. The Nucleophile role is filled by C380.

It belongs to the class I-like SAM-binding methyltransferase superfamily. RNA M5U methyltransferase family. RlmD subfamily.

The catalysed reaction is uridine(1939) in 23S rRNA + S-adenosyl-L-methionine = 5-methyluridine(1939) in 23S rRNA + S-adenosyl-L-homocysteine + H(+). Catalyzes the formation of 5-methyl-uridine at position 1939 (m5U1939) in 23S rRNA. In Dichelobacter nodosus (strain VCS1703A), this protein is 23S rRNA (uracil(1939)-C(5))-methyltransferase RlmD.